The following is a 194-amino-acid chain: Holliday junction branch migration complex subunit RuvA (194 aa).

A domain I region spans residues 1 to 64; the sequence is MIGRLRGILA…EDSVSLYGFL (64 aa). The segment at 65-140 is domain II; the sequence is REGERRLFRD…RAADFSSGAP (76 aa). Residues 140-144 are flexible linker; that stretch reads PITGQ. A domain III region spans residues 145-194; the sequence is LGPDAISEATVALQQLGYKPAEAARMARDAGAEGGEVATVIRKALQAALR.

It belongs to the RuvA family. As to quaternary structure, homotetramer. Forms an RuvA(8)-RuvB(12)-Holliday junction (HJ) complex. HJ DNA is sandwiched between 2 RuvA tetramers; dsDNA enters through RuvA and exits via RuvB. An RuvB hexamer assembles on each DNA strand where it exits the tetramer. Each RuvB hexamer is contacted by two RuvA subunits (via domain III) on 2 adjacent RuvB subunits; this complex drives branch migration. In the full resolvosome a probable DNA-RuvA(4)-RuvB(12)-RuvC(2) complex forms which resolves the HJ.

It localises to the cytoplasm. Functionally, the RuvA-RuvB-RuvC complex processes Holliday junction (HJ) DNA during genetic recombination and DNA repair, while the RuvA-RuvB complex plays an important role in the rescue of blocked DNA replication forks via replication fork reversal (RFR). RuvA specifically binds to HJ cruciform DNA, conferring on it an open structure. The RuvB hexamer acts as an ATP-dependent pump, pulling dsDNA into and through the RuvAB complex. HJ branch migration allows RuvC to scan DNA until it finds its consensus sequence, where it cleaves and resolves the cruciform DNA. This is Holliday junction branch migration complex subunit RuvA from Xanthomonas oryzae pv. oryzae (strain MAFF 311018).